The chain runs to 673 residues: Protein transport Sec1a (673 aa).

Residues 538 to 591 (SSHKEESEARTGSVRKSSAPTAVPERKATPHSMRSRRTATWARPHSSDDGYSSD) form a disordered region.

The protein belongs to the STXBP/unc-18/SEC1 family. In terms of assembly, does not bind the syntaxin KNOLLE.

Its function is as follows. Involved in the vesicle trafficking. Binds syntaxins. This Arabidopsis thaliana (Mouse-ear cress) protein is Protein transport Sec1a (SEC1A).